The following is a 175-amino-acid chain: Large ribosomal subunit protein uL10 (175 aa).

The protein belongs to the universal ribosomal protein uL10 family. In terms of assembly, part of the ribosomal stalk of the 50S ribosomal subunit. The N-terminus interacts with L11 and the large rRNA to form the base of the stalk. The C-terminus forms an elongated spine to which L12 dimers bind in a sequential fashion forming a multimeric L10(L12)X complex.

Its function is as follows. Forms part of the ribosomal stalk, playing a central role in the interaction of the ribosome with GTP-bound translation factors. The polypeptide is Large ribosomal subunit protein uL10 (Prochlorococcus marinus (strain MIT 9211)).